The following is a 417-amino-acid chain: Gamma-glutamyl phosphate reductase (417 aa).

This sequence belongs to the gamma-glutamyl phosphate reductase family.

It is found in the cytoplasm. It carries out the reaction L-glutamate 5-semialdehyde + phosphate + NADP(+) = L-glutamyl 5-phosphate + NADPH + H(+). It participates in amino-acid biosynthesis; L-proline biosynthesis; L-glutamate 5-semialdehyde from L-glutamate: step 2/2. Functionally, catalyzes the NADPH-dependent reduction of L-glutamate 5-phosphate into L-glutamate 5-semialdehyde and phosphate. The product spontaneously undergoes cyclization to form 1-pyrroline-5-carboxylate. The polypeptide is Gamma-glutamyl phosphate reductase (Escherichia coli O81 (strain ED1a)).